An 878-amino-acid polypeptide reads, in one-letter code: Phosphoenolpyruvate carboxylase (878 aa).

Catalysis depends on residues histidine 137 and lysine 545.

This sequence belongs to the PEPCase type 1 family. Mg(2+) serves as cofactor.

The enzyme catalyses oxaloacetate + phosphate = phosphoenolpyruvate + hydrogencarbonate. Its function is as follows. Forms oxaloacetate, a four-carbon dicarboxylic acid source for the tricarboxylic acid cycle. This is Phosphoenolpyruvate carboxylase from Serratia proteamaculans (strain 568).